We begin with the raw amino-acid sequence, 102 residues long: Gastrin/cholecystokinin-like peptide (102 aa).

The signal sequence occupies residues 1–20 (MDKKVCVSILLAMLAIAALC). A propeptide spanning residues 21–45 (RPMTELESARHGAQRKNSISDVSRR) is cleaved from the precursor. Position 86 is a sulfotyrosine (Tyr-86). Phe-92 is subject to Phenylalanine amide. A propeptide spanning residues 96–102 (SSEVTES) is cleaved from the precursor.

It belongs to the gastrin/cholecystokinin family. Expressed in antrum, duodenum, colon, pancreas, brain and testis. No expression found in kidney, lung, liver, skin or distal two-thirds of small intestine. In the brain, strongly expressed in the pituitary gland with moderate expression in the neural lobe, brain stem and hypothalamus.

The protein localises to the secreted. May control digestion processes. The polypeptide is Gastrin/cholecystokinin-like peptide (GAST) (Aquarana catesbeiana (American bullfrog)).